The following is a 385-amino-acid chain: Polyketide synthase 2 (385 aa).

The active site involves cysteine 157.

This sequence belongs to the thiolase-like superfamily. Chalcone/stilbene synthases family. As to expression, expressed in leaves and glandular trichomes.

The protein localises to the cytoplasm. Functionally, polyketide synthase responsible for the biosynthesis of secondary metabolites. The protein is Polyketide synthase 2 (PKSG2) of Cannabis sativa (Hemp).